Reading from the N-terminus, the 919-residue chain is MKFKTVQEIARLYTNYFQDKGHTIVPSSSLIPKGDPTLLFTTAGMVQFKPLFTGAVELPYTRAASVQKCVRTTDLEVVGKTERHCTFFEMLGNFSFGDYFKKEAIEYALDFSLNHLEIPKDKIWVTIYLDDDEAKKFWMDLGIPEERIVRLGKKDNFWGPAGDSGACGPCSELYLDRGPEKGGPTCGNNPNCKPGCDCDRYLEYWNLVFNQFNQTVSGELLPLKQTGIDTGSGLERVAMLLQEVDSVYDTDELKSIIKQIEILSGYKYDETTKQSFRVITDHSRSVFFSLGDGIYPDRTGRGYVIRRLIRRASLFARKLGIHEPFLYKLVSTLKDLYSLRYPELKDKAKDIESILKKEEELFLHTLEVGLEELETVLEHLKKEKQTVVTGKEGFRLYSTYGFPREMTKELVEERGFSFDDKGFEEELEKDRYLSRASWKGKKIQYLTGFSASPELKTEFLGYTETKAKSRVLHLFVDGKSVTSTKQGEEAVIVLDKTPFYAEGGGQIGDTGYLKKEGFQFQVQDTQKENDTFLHMGMILKGNLSVGDVVDSEIEVERRQNLANHHSGTHLLNGALRRILGSHVTQKGSIVSADYLRFDFSHPKALSKEEIIQIETDVNEAVSANIPVKTEVLEIGQAKESGALSMFDEKYGSVVRVISMGDKSKEFCGGTHVSNTKEIGFFAIVKEGSPGAGNRRIEAICGESVVNYFLHQFQTLASKIETHNLSAKETFGDLKEFGITKEVPSPEILQTMFHQDGKEVVTRLRKLREELEIELEEKSSALFKAKKKREQKEFQMNPELVDGLLQKAHHFPKGKVVTEVFPSVDAKSLKDLADSLKAKEPEILCLFGTTEGESSTLVFMCNKVLNERGIHCGDILKETLVMLDGKGGGRPDMAQGGGKKPESVAKSLEFALSLAKIKLS.

Histidine 565, histidine 569, cysteine 667, and histidine 671 together coordinate Zn(2+).

Belongs to the class-II aminoacyl-tRNA synthetase family. Zn(2+) serves as cofactor.

The protein localises to the cytoplasm. The enzyme catalyses tRNA(Ala) + L-alanine + ATP = L-alanyl-tRNA(Ala) + AMP + diphosphate. Its function is as follows. Catalyzes the attachment of alanine to tRNA(Ala) in a two-step reaction: alanine is first activated by ATP to form Ala-AMP and then transferred to the acceptor end of tRNA(Ala). Also edits incorrectly charged Ser-tRNA(Ala) and Gly-tRNA(Ala) via its editing domain. The polypeptide is Alanine--tRNA ligase (Leptospira biflexa serovar Patoc (strain Patoc 1 / Ames)).